The sequence spans 108 residues: ATP-dependent Clp protease adapter protein ClpS (108 aa).

It belongs to the ClpS family. Binds to the N-terminal domain of the chaperone ClpA.

Its function is as follows. Involved in the modulation of the specificity of the ClpAP-mediated ATP-dependent protein degradation. The protein is ATP-dependent Clp protease adapter protein ClpS of Mycobacterium leprae (strain TN).